The following is a 303-amino-acid chain: UDP-3-O-acyl-N-acetylglucosamine deacetylase (303 aa).

Residues His-78, His-237, and Asp-241 each contribute to the Zn(2+) site. The active-site Proton donor is His-264.

This sequence belongs to the LpxC family. Zn(2+) serves as cofactor.

The catalysed reaction is a UDP-3-O-[(3R)-3-hydroxyacyl]-N-acetyl-alpha-D-glucosamine + H2O = a UDP-3-O-[(3R)-3-hydroxyacyl]-alpha-D-glucosamine + acetate. Its pathway is glycolipid biosynthesis; lipid IV(A) biosynthesis; lipid IV(A) from (3R)-3-hydroxytetradecanoyl-[acyl-carrier-protein] and UDP-N-acetyl-alpha-D-glucosamine: step 2/6. Functionally, catalyzes the hydrolysis of UDP-3-O-myristoyl-N-acetylglucosamine to form UDP-3-O-myristoylglucosamine and acetate, the committed step in lipid A biosynthesis. This Pseudomonas fluorescens (strain SBW25) protein is UDP-3-O-acyl-N-acetylglucosamine deacetylase.